Here is a 315-residue protein sequence, read N- to C-terminus: Borealin (315 aa).

Disordered stretches follow at residues 103-126 (IEGH…GASG) and 138-226 (LRST…TPPM). T146 carries the post-translational modification Phosphothreonine. S152 is subject to Phosphoserine. A compositionally biased stretch (basic residues) spans 153 to 162 (ARARRARRSR). A Phosphoserine modification is found at S163. The span at 178–188 (SISSSSSSSRN) shows a compositional bias: low complexity. At S205 the chain carries Phosphoserine. T209 is subject to Phosphothreonine. Residues S218, S220, and S244 each carry the phosphoserine modification.

It belongs to the borealin family. As to quaternary structure, component of the CPC complex. As to expression, ubiquitously expressed in the early embryo. Expression is restricted to the ventral nerve cord and brain during later embryonic stages.

The protein localises to the nucleus. The protein resides in the chromosome. It localises to the centromere. It is found in the cytoplasm. Its subcellular location is the cytoskeleton. The protein localises to the spindle. Component of the chromosomal passenger complex (CPC), a complex that acts as a key regulator of embryonic mitosis. The CPC complex has essential functions at the centromere for ensuring sister chromatid cohesion, recruitment of the CPC to kinetochores, and chromosome alignment and segregation. There is no function in meiotic histone phosphorylation or spindle formation. The sequence is that of Borealin (borr) from Drosophila melanogaster (Fruit fly).